The following is a 355-amino-acid chain: MRFDLEPPSHASAAHRVAVLLVNLGTPDEPTPRAVRRYLAQFLSDPRVVEIPQLVWQVILRTLILPLRGRASAKKYAAVWLPEGSPLRVYTERQVESLKPLFAANGYRVIVDYAMRYGTPSIADVLAQLKRAGAERVLLLPMYPQYSASTTATAFDAAFAALGRMRNQPEVRTVRHYADHPAYIHALAEQVRQYWAAHGRPAFDSGDKLVLSFHGVPKRTLDLGDPYHDQCQQTAALLMSALGLTTFECRVTFQSRFGKAEWLQPYTAPTLKELGAAGVRRADVFCPGFTADCLETIEEIGMEVRDEFLHGGGKEFHRIPCLNASHAWIAALGEIAAENLQGWPVRVATAPEAVT.

His-214 and Glu-295 together coordinate Fe cation.

The protein belongs to the ferrochelatase family.

The protein localises to the cytoplasm. The catalysed reaction is heme b + 2 H(+) = protoporphyrin IX + Fe(2+). Its pathway is porphyrin-containing compound metabolism; protoheme biosynthesis; protoheme from protoporphyrin-IX: step 1/1. Functionally, catalyzes the ferrous insertion into protoporphyrin IX. This chain is Ferrochelatase, found in Burkholderia thailandensis (strain ATCC 700388 / DSM 13276 / CCUG 48851 / CIP 106301 / E264).